A 353-amino-acid chain; its full sequence is tRNA N6-adenosine threonylcarbamoyltransferase (353 aa).

Fe cation-binding residues include His-109 and His-113. Substrate-binding positions include 136–140 (TVSGG), Asp-169, Gly-182, Asp-186, and Asn-284. Asp-312 lines the Fe cation pocket.

The protein belongs to the KAE1 / TsaD family. Requires Fe(2+) as cofactor.

The protein resides in the cytoplasm. It carries out the reaction L-threonylcarbamoyladenylate + adenosine(37) in tRNA = N(6)-L-threonylcarbamoyladenosine(37) in tRNA + AMP + H(+). Functionally, required for the formation of a threonylcarbamoyl group on adenosine at position 37 (t(6)A37) in tRNAs that read codons beginning with adenine. Is involved in the transfer of the threonylcarbamoyl moiety of threonylcarbamoyl-AMP (TC-AMP) to the N6 group of A37, together with TsaE and TsaB. TsaD likely plays a direct catalytic role in this reaction. The chain is tRNA N6-adenosine threonylcarbamoyltransferase from Chlorobaculum tepidum (strain ATCC 49652 / DSM 12025 / NBRC 103806 / TLS) (Chlorobium tepidum).